The sequence spans 478 residues: tRNA (guanine(10)-N(2))-methyltransferase TRMT11 (478 aa).

Residues 457–478 (EERARSEMANAENVKSKGKEDV) form a disordered region.

Belongs to the class I-like SAM-binding methyltransferase superfamily. TRM11 methyltransferase family. As to quaternary structure, part of the heterodimeric TRMT11-TRM112 methyltransferase complex; this complex forms an active tRNA methyltransferase, where TRMT112 acts as an activator of the catalytic subunit TRMT11.

It is found in the cytoplasm. The enzyme catalyses guanosine(10) in tRNA + S-adenosyl-L-methionine = N(2)-methylguanosine(10) in tRNA + S-adenosyl-L-homocysteine + H(+). Its function is as follows. Catalytic subunit of the TRMT11-TRM112 methyltransferase complex, that specifically mediates the S-adenosyl-L-methionine-dependent N(2)-methylation of guanosine nucleotide at position 10 (m2G10) in tRNAs. This is one of the major tRNA (guanine-N(2))-methyltransferases. The sequence is that of tRNA (guanine(10)-N(2))-methyltransferase TRMT11 (trmt11.L) from Xenopus laevis (African clawed frog).